The sequence spans 117 residues: Biofilm growth-associated repressor (117 aa).

The 95-residue stretch at 20 to 114 (AMEKRATEVA…ALYAIFCAPE (95 aa)) folds into the HTH arsR-type domain. The segment at residues 54–77 (VGELEAKLDIRQPTLSQQLGVLRE) is a DNA-binding region (H-T-H motif).

Represses an operon that comprises at least itself and blh. Binds to a palindromic AT-rich sequence spanning the -10 region of the blh promoter and blocks transcription of the operon. The chain is Biofilm growth-associated repressor (bigR) from Agrobacterium fabrum (strain C58 / ATCC 33970) (Agrobacterium tumefaciens (strain C58)).